Reading from the N-terminus, the 617-residue chain is MLVPLAKLSCPAYQCFHALKIKKNYLPLCATRWSSTSTVPRITTHYTIYPRDKDKRWEGVNMERFAEGADVVIVGAGPAGLSAAVRLKQLAAAHEKDIRVCLVEKAAQIGAHTLSGACLDPGAFKELFPDWKEKGAPLNTPVTEDRFGILTEKYRIPVPILPGLPMNNHGNYIVRLGHLVSWMGEQAEALGVEVYPGYAAAEVLFHDDGSVKGIATNDVGIQKDGAPKATFERGLELHAKVTIFAEGCHGHLAKQLYKKFDLRANCEPQTYGIGLKELWVIDEKNWKPGRVDHTVGWPLDRHTYGGSFLYHLNEGEPLVALGLVVGLDYQNPYLSPFREFQRWKHHPSIRPTLEGGKRIAYGARALNEGGFQSIPKLTFPGGLLIGCSPGFMNVPKIKGTHTAMKSGILAAESIFNQLTSENLQSKTMGLHVTEYEDNLKNSWVWKELYSVRNIRPSCHGVLGVYGGMIYTGIFYWILRGMEPWTLKHKGSDFERLKPAKDCTPIEYPKPDGQISFDLLSSVALSGTNHEHDQPAHLTLRDDSIPVNRNLSIYDGPEQRFCPAGVYEFVPVEQGDGFRLQINAQNCVHCKTCDIKDPSQNINWVVPEGGGGPAYNGM.

The transit peptide at 1–33 directs the protein to the mitochondrion; it reads MLVPLAKLSCPAYQCFHALKIKKNYLPLCATRW. An FAD-binding site is contributed by 71–85; sequence VVIVGAGPAGLSAAV. Lys96 is subject to N6-acetyllysine. An intramembrane segment occupies 109–130; that stretch reads IGAHTLSGACLDPGAFKELFPD. Residues Lys132 and Lys223 each carry the N6-acetyllysine modification. Residues Gly305 and Gly306 each coordinate a ubiquinone. Lys357 carries the N6-acetyllysine modification. The stretch at 428 to 447 is an intramembrane region; sequence MGLHVTEYEDNLKNSWVWKE. Residue Ser551 is modified to Phosphoserine. [4Fe-4S] cluster is bound by residues Cys561, Cys586, Cys589, and Cys592. One can recognise a 4Fe-4S ferredoxin-type domain in the interval 577–606; that stretch reads FRLQINAQNCVHCKTCDIKDPSQNINWVVP.

Belongs to the ETF-QO/FixC family. As to quaternary structure, monomer. It depends on [4Fe-4S] cluster as a cofactor. Requires FAD as cofactor.

Its subcellular location is the mitochondrion inner membrane. The catalysed reaction is a ubiquinone + reduced [electron-transfer flavoprotein] = a ubiquinol + oxidized [electron-transfer flavoprotein] + H(+). Functionally, accepts electrons from ETF and reduces ubiquinone. The sequence is that of Electron transfer flavoprotein-ubiquinone oxidoreductase, mitochondrial (ETFDH) from Pongo abelii (Sumatran orangutan).